The sequence spans 83 residues: MSSGGLLLLLGLLTLWEVLTPVSSKDRPKFCELPADIGPCEDFTGAFHYSPREHECIEFIYGGCKGNANNFNTLEECESACAA.

An N-terminal signal peptide occupies residues 1-24; that stretch reads MSSGGLLLLLGLLTLWEVLTPVSS. Residues 31 to 81 enclose the BPTI/Kunitz inhibitor domain; that stretch reads CELPADIGPCEDFTGAFHYSPREHECIEFIYGGCKGNANNFNTLEECESAC. Intrachain disulfides connect Cys31–Cys81, Cys40–Cys64, and Cys56–Cys77.

This sequence belongs to the venom Kunitz-type family. In terms of tissue distribution, expressed by the venom gland.

The protein localises to the secreted. Serine protease inhibitor. This Oxyuranus scutellatus scutellatus (Australian taipan) protein is Kunitz-type serine protease inhibitor scutellin-3.